Here is a 783-residue protein sequence, read N- to C-terminus: Coiled-coil domain-containing protein 30 (783 aa).

Residues Met-1–Gln-22 are compositionally biased toward basic and acidic residues. 3 disordered regions span residues Met-1 to Gly-26, Leu-101 to Lys-191, and Leu-209 to Glu-231. Residues Gln-22 to His-98 adopt a coiled-coil conformation. A compositionally biased stretch (polar residues) spans Ala-106 to Asn-115. Positions Ile-131–Lys-191 are enriched in basic and acidic residues. 2 coiled-coil regions span residues Arg-165–His-497 and Asp-527–Arg-622. Residues Glu-731 to Ser-755 form a disordered region.

It belongs to the prefoldin subunit beta family. Expressed in brain, kidney, pancreas, placenta, liver, thymus and prostate.

In Homo sapiens (Human), this protein is Coiled-coil domain-containing protein 30 (CCDC30).